The chain runs to 146 residues: Hemoglobin subunit beta-1 (146 aa).

Positions 2 to 146 constitute a Globin domain; the sequence is HWTAEEKQLI…VAHALARRYH (145 aa). Residues His63 and His92 each coordinate heme b.

Belongs to the globin family. As to quaternary structure, heterotetramer of two alpha chains and two beta chains. As to expression, red blood cells.

Its function is as follows. Involved in oxygen transport from the lung to the various peripheral tissues. The chain is Hemoglobin subunit beta-1 (HBB1) from Iguana iguana (Common iguana).